The primary structure comprises 423 residues: Cytochrome b mRNA maturase bI2 (423 aa).

Over 1–31 (MAFRKSNVYLSLVNSYIIDSPQPSSINYWWN) the chain is Mitochondrial matrix. The interval 1–143 (MAFRKSNVYL…CVYGQMSHWG (143 aa)) is cytochrome b. The helical transmembrane segment at 32-52 (MGSLLGLCLVIQIVTGIFMAM) threads the bilayer. At 53-84 (HYSSNIELAFSSVEHIMRDVHNGYILRYLHAN) the chain is on the mitochondrial intermembrane side. The chain crosses the membrane as a helical span at residues 85 to 105 (GASFFFMVMFMHMAKGLYYGS). Topologically, residues 106–115 (YRSPRVTLWN) are mitochondrial matrix. A helical membrane pass occupies residues 116 to 136 (VGVIIFILTIATAFLGYCCVY). Over 137-153 (GQMSHWGNMNIASNMFN) the chain is Mitochondrial intermembrane. Positions 144–423 (NMNIASNMFN…SMKYKLGNYL (280 aa)) are maturase. Residues 154–174 (MMKTIYMMMLMLLIYIFYTIM) form a helical membrane-spanning segment. Residues 175-423 (MRQMMKTKEY…SMKYKLGNYL (249 aa)) lie on the Mitochondrial matrix side of the membrane.

This sequence in the N-terminal section; belongs to the cytochrome b family. It in the C-terminal section; belongs to the LAGLIDADG endonuclease family.

It is found in the mitochondrion inner membrane. Its function is as follows. This protein is responsible for splicing and maturation of cytochrome b mRNA. Specifically, it may be responsible for the splicing specificity of the second intron. This Saccharomyces cerevisiae (strain ATCC 204508 / S288c) (Baker's yeast) protein is Cytochrome b mRNA maturase bI2 (BI2).